A 1296-amino-acid chain; its full sequence is Phosphoribosylformylglycinamidine synthase (1296 aa).

Positions 304–323 are disordered; it reads WPGAATGSGGEIRDEGATGR. ATP is bound by residues 306 to 317 and Ala677; that span reads GAATGSGGEIRD. The Mg(2+) site is built by Asp678, Glu717, Asn721, and Asp885. Position 887 (Ser887) interacts with ATP. The span at 1000–1013 shows a compositional bias: basic and acidic residues; the sequence is PDCADQEHQAKQDE. Positions 1000 to 1019 are disordered; sequence PDCADQEHQAKQDESDPGLN. The 254-residue stretch at 1043–1296 folds into the Glutamine amidotransferase type-1 domain; that stretch reads VAVLREQGVN…MFRNARKQLG (254 aa). Catalysis depends on Cys1136, which acts as the Nucleophile. Residues His1261 and Glu1263 contribute to the active site.

In the N-terminal section; belongs to the FGAMS family. As to quaternary structure, monomer.

Its subcellular location is the cytoplasm. It carries out the reaction N(2)-formyl-N(1)-(5-phospho-beta-D-ribosyl)glycinamide + L-glutamine + ATP + H2O = 2-formamido-N(1)-(5-O-phospho-beta-D-ribosyl)acetamidine + L-glutamate + ADP + phosphate + H(+). Its pathway is purine metabolism; IMP biosynthesis via de novo pathway; 5-amino-1-(5-phospho-D-ribosyl)imidazole from N(2)-formyl-N(1)-(5-phospho-D-ribosyl)glycinamide: step 1/2. In terms of biological role, phosphoribosylformylglycinamidine synthase involved in the purines biosynthetic pathway. Catalyzes the ATP-dependent conversion of formylglycinamide ribonucleotide (FGAR) and glutamine to yield formylglycinamidine ribonucleotide (FGAM) and glutamate. The chain is Phosphoribosylformylglycinamidine synthase from Yersinia pseudotuberculosis serotype I (strain IP32953).